We begin with the raw amino-acid sequence, 115 residues long: Large ribosomal subunit protein bL19 (115 aa).

The protein belongs to the bacterial ribosomal protein bL19 family.

Its function is as follows. This protein is located at the 30S-50S ribosomal subunit interface and may play a role in the structure and function of the aminoacyl-tRNA binding site. In Escherichia coli O139:H28 (strain E24377A / ETEC), this protein is Large ribosomal subunit protein bL19.